The sequence spans 138 residues: Acidic phospholipase A2 homolog sistruxin A (138 aa).

The first 37 residues, 1 to 37, serve as a signal peptide directing secretion; the sequence is MRALWIVAVLLLGVEGSLVEFETLIMKIAGRSGVWYY. Disulfide bonds link Cys-42–Cys-131, Cys-44–Cys-60, Cys-59–Cys-111, Cys-65–Cys-138, Cys-66–Cys-104, Cys-73–Cys-97, and Cys-91–Cys-102. Positions 78–83 are excised as a propeptide; sequence DVYTYR. Residue Gln-84 is modified to Pyrrolidone carboxylic acid. A propeptide spanning residues 119-124 is cleaved from the precursor; the sequence is YNHKYW.

It belongs to the phospholipase A2 family. Group II subfamily. D49 sub-subfamily. In terms of assembly, heterodimer of an acidic subunit and a basic chain. The acidic subunit is non-toxic, without enzymatic activity and comprises 3 peptides that are cross-linked by 7 disulfide bridges. The basic subunit is toxic, has phospholipase A2 activity and is composed of a single chain. Expressed by the venom gland.

The protein resides in the secreted. Its function is as follows. Snake venom phospholipase A2 (PLA2) that inhibits neuromuscular transmission by blocking acetylcholine release from the nerve termini. This Sistrurus tergeminus (Western massasauga) protein is Acidic phospholipase A2 homolog sistruxin A.